The primary structure comprises 252 residues: MSGHSKWANIKHKKAKADAQKGKIFTKLGRELIVAARAGGGDPNNNFRLKIAIDNAKSANMPNDNIQRAIQKGVGGGEGESYEELRYEGYGPGGVAIMVDIMTDNRNRTAGEVRHIFSKHGGNLGETGCVNWMFTEKGQLMILKEDLKCDEDELMLLVLEAGAEDLQQDEESFVVYTAPGDMEAVRQALLDQGIAIEEAKINQVPQNTIEIADLEQAKKLVRMMELLEDHDDSQGVYANFEFADSIDEEELD.

Belongs to the TACO1 family.

It localises to the cytoplasm. The polypeptide is Probable transcriptional regulatory protein DSY2470 (Desulfitobacterium hafniense (strain Y51)).